The following is a 570-amino-acid chain: Apyrase (570 aa).

An N-terminal signal peptide occupies residues 1–23 (MALVRFATIITVLCHLAIQDGAA). A divalent metal cation-binding residues include D43, H45, and D94. N108 carries an N-linked (GlcNAc...) asparagine glycan. A divalent metal cation is bound by residues N126, H229, and H253. N287 and N326 each carry an N-linked (GlcNAc...) asparagine glycan. Residue R367 participates in AMP binding. N387 carries N-linked (GlcNAc...) asparagine glycosylation. The AMP site is built by R402 and D507. Residues N552 and N555 are each glycosylated (N-linked (GlcNAc...) asparagine).

It belongs to the 5'-nucleotidase family. In terms of assembly, interacts with human PLAT; the interaction results in PLAT activation probably via an allosteric activation mechanism. The cofactor is a divalent metal cation. As to expression, saliva (at protein level). Salivary gland (at protein level). Not detected in midgut.

It is found in the secreted. The catalysed reaction is a ribonucleoside 5'-triphosphate + 2 H2O = a ribonucleoside 5'-phosphate + 2 phosphate + 2 H(+). In terms of biological role, cleaves adenosine triphosphate (ATP) and adenosine diphosphate (ADP) to adenosine monophosphate (AMP) and inorganic phosphate. Enhances fibrin degradation in the midgut blood bolus. Activates human tissue plasminogen activator (PLAT), probably via an allosteric activation mechanism. Inhibits ADP-mediated host platelet aggregation in vitro and in mosquito midgut. Inhibits host neutrophil activation in the mosquito midgut: reduces neutrophil extracellular traps formation in the presence of platelets and the formation of total cell- and mitochondrial-derived reactive oxygen species. (Microbial infection) Promotes Plasmodium berghei parasite transmission from the mammalian host to the mosquito probably by reducing the blood bolus viscosity. Facilitates sporozoite transmission from the mosquito to the mammalian host during blood feeding. In Anopheles gambiae (African malaria mosquito), this protein is Apyrase.